Consider the following 116-residue polypeptide: Large ribosomal subunit protein bL17 (116 aa).

Belongs to the bacterial ribosomal protein bL17 family. Part of the 50S ribosomal subunit. Contacts protein L32.

This chain is Large ribosomal subunit protein bL17, found in Synechococcus sp. (strain CC9311).